The following is a 255-amino-acid chain: Lactose phosphotransferase system repressor (255 aa).

Residues 3-58 (KKRRLEKILDMLKIDGTITIKEIIDELDISDMTARRDLDALEADGLLTRTHGGAQL) enclose the HTH deoR-type domain. Positions 20–39 (ITIKEIIDELDISDMTARRD) form a DNA-binding region, H-T-H motif.

In terms of biological role, repressor of the lactose catabolism operon. Galactose-6-phosphate is the inducer. This Lactococcus lactis subsp. lactis (Streptococcus lactis) protein is Lactose phosphotransferase system repressor (lacR).